The sequence spans 121 residues: Large ribosomal subunit protein bL12 (121 aa).

The protein belongs to the bacterial ribosomal protein bL12 family. As to quaternary structure, homodimer. Part of the ribosomal stalk of the 50S ribosomal subunit. Forms a multimeric L10(L12)X complex, where L10 forms an elongated spine to which 2 to 4 L12 dimers bind in a sequential fashion. Binds GTP-bound translation factors.

Forms part of the ribosomal stalk which helps the ribosome interact with GTP-bound translation factors. Is thus essential for accurate translation. This chain is Large ribosomal subunit protein bL12, found in Shewanella pealeana (strain ATCC 700345 / ANG-SQ1).